The sequence spans 299 residues: Ribosomal RNA small subunit methyltransferase H (299 aa).

S-adenosyl-L-methionine contacts are provided by residues 36–38 (GGH), Asp55, Asp103, and Gln110. Composition is skewed to basic and acidic residues over residues 268 to 282 (KPVR…ENPR) and 289 to 299 (RAAERIEKGGD). Residues 268 to 299 (KPVRPSEEEIRENPRARSGRLRAAERIEKGGD) are disordered.

The protein belongs to the methyltransferase superfamily. RsmH family.

The protein localises to the cytoplasm. The catalysed reaction is cytidine(1402) in 16S rRNA + S-adenosyl-L-methionine = N(4)-methylcytidine(1402) in 16S rRNA + S-adenosyl-L-homocysteine + H(+). Functionally, specifically methylates the N4 position of cytidine in position 1402 (C1402) of 16S rRNA. The polypeptide is Ribosomal RNA small subunit methyltransferase H (Thermotoga petrophila (strain ATCC BAA-488 / DSM 13995 / JCM 10881 / RKU-1)).